Consider the following 279-residue polypeptide: MGITLKNVSYTYQAGTPFEGPALFGVDLEIKSGSYTALIGHTGSGKSTILQLLNGLLVPNQGSVEVGSTVITADSVNKDIKQVRKKVGLVFQFPESQVFDETVLKDVAFGPQNFGVSKEEAEALAREKLHLVGISEDLFNRSPFELSGGQMRRVAIASILAMEPDILVLDEPTAGLDPSGRKELMRIFEELHRAGMTIVLVTHLMDDVANFADTVYVLDKGRVVKSGQPAQVFQDLDFMESIQLGVPKITKFAHELAEKGMNFSHYPITIEEFKEILHG.

The ABC transporter domain occupies 3-245 (ITLKNVSYTY…LDFMESIQLG (243 aa)). Residue 40–47 (GHTGSGKS) coordinates ATP.

The protein belongs to the ABC transporter superfamily. Energy-coupling factor EcfA family. As to quaternary structure, forms a stable energy-coupling factor (ECF) transporter complex composed of 2 membrane-embedded substrate-binding proteins (S component), 2 ATP-binding proteins (A component) and 2 transmembrane proteins (T component).

Its subcellular location is the cell membrane. ATP-binding (A) component of a common energy-coupling factor (ECF) ABC-transporter complex. Unlike classic ABC transporters this ECF transporter provides the energy necessary to transport a number of different substrates. In Streptococcus sanguinis (strain SK36), this protein is Energy-coupling factor transporter ATP-binding protein EcfA2.